We begin with the raw amino-acid sequence, 127 residues long: Large ribosomal subunit protein bL17 (127 aa).

Belongs to the bacterial ribosomal protein bL17 family. In terms of assembly, part of the 50S ribosomal subunit. Contacts protein L32.

The protein is Large ribosomal subunit protein bL17 of Stenotrophomonas maltophilia (strain K279a).